The following is a 288-amino-acid chain: Acetyl-coenzyme A carboxylase carboxyl transferase subunit beta (288 aa).

The CoA carboxyltransferase N-terminal domain occupies leucine 24–alanine 288.

The protein belongs to the AccD/PCCB family. Acetyl-CoA carboxylase is a heterohexamer composed of biotin carboxyl carrier protein (AccB), biotin carboxylase (AccC) and two subunits each of ACCase subunit alpha (AccA) and ACCase subunit beta (AccD).

Its subcellular location is the cytoplasm. It carries out the reaction N(6)-carboxybiotinyl-L-lysyl-[protein] + acetyl-CoA = N(6)-biotinyl-L-lysyl-[protein] + malonyl-CoA. The protein operates within lipid metabolism; malonyl-CoA biosynthesis; malonyl-CoA from acetyl-CoA: step 1/1. Its function is as follows. Component of the acetyl coenzyme A carboxylase (ACC) complex. Biotin carboxylase (BC) catalyzes the carboxylation of biotin on its carrier protein (BCCP) and then the CO(2) group is transferred by the transcarboxylase to acetyl-CoA to form malonyl-CoA. The sequence is that of Acetyl-coenzyme A carboxylase carboxyl transferase subunit beta from Methylocella silvestris (strain DSM 15510 / CIP 108128 / LMG 27833 / NCIMB 13906 / BL2).